Here is a 478-residue protein sequence, read N- to C-terminus: Melanopsin (478 aa).

Positions 1–14 (MNPPSGPRVPPSPT) are enriched in pro residues. A disordered region spans residues 1–32 (MNPPSGPRVPPSPTQEPSCMATPAPPSWWDSS). Topologically, residues 1-72 (MNPPSGPRVP…VDVPDHAHYT (72 aa)) are extracellular. Residues 73–93 (LGTVILLVGLTGMLGNLTVIY) form a helical membrane-spanning segment. The Cytoplasmic segment spans residues 94–107 (TFCRSRSLRTPANM). A helical membrane pass occupies residues 108 to 128 (FIINLAVSDFLMSFTQAPVFF). The Extracellular segment spans residues 129–144 (TSSLYKQWLFGETGCE). Cysteines 143 and 221 form a disulfide. Residues 145–165 (FYAFCGALFGISSMITLTAIA) traverse the membrane as a helical segment. At 166–188 (LDRYLVITRPLATFGVASKRRAA) the chain is on the cytoplasmic side. Residues 189 to 209 (FVLLGVWLYALAWSLPPFFGW) form a helical membrane-spanning segment. The Extracellular segment spans residues 210 to 238 (SAYVPEGLLTSCSWDYMSFTPAVRAYTML). Residues 239–259 (LCCFVFFLPLLIIIYCYIFIF) form a helical membrane-spanning segment. Over 260–296 (RAIRETGRALQTFGACKGNGESLWQRQRLQSECKMAK) the chain is Cytoplasmic. A helical membrane pass occupies residues 297-317 (IMLLVILLFVLSWAPYSAVAL). The Extracellular portion of the chain corresponds to 318–332 (VAFAGYAHVLTPYMS). Residues 333-353 (SVPAVIAKASAIHNPIIYAIT) form a helical membrane-spanning segment. Position 340 is an N6-(retinylidene)lysine (Lys-340). Over 354–478 (HPKYRVAIAQ…GLIPSQDPRM (125 aa)) the chain is Cytoplasmic. The interval 440–478 (LYGQGLEDLEAKAPPRPQGHEAETPGKTKGLIPSQDPRM) is disordered. Basic and acidic residues predominate over residues 448–465 (LEAKAPPRPQGHEAETPG).

It belongs to the G-protein coupled receptor 1 family. Opsin subfamily. In terms of tissue distribution, expressed in the retina.

It localises to the cell membrane. The protein resides in the cell projection. The protein localises to the axon. It is found in the dendrite. Its subcellular location is the perikaryon. Functionally, photoreceptor that binds cis-retinaldehydes. Contributes to pupillar reflex, photoentrainment and other non-image forming responses to light. May be involved in the optokinetic visual tracking response. May be involved in the regulation of retinal hyaloid vessel growth and regression. This Homo sapiens (Human) protein is Melanopsin (OPN4).